We begin with the raw amino-acid sequence, 282 residues long: 2-dehydro-3-deoxyphosphooctonate aldolase (282 aa).

It belongs to the KdsA family.

The protein localises to the cytoplasm. The enzyme catalyses D-arabinose 5-phosphate + phosphoenolpyruvate + H2O = 3-deoxy-alpha-D-manno-2-octulosonate-8-phosphate + phosphate. Its pathway is carbohydrate biosynthesis; 3-deoxy-D-manno-octulosonate biosynthesis; 3-deoxy-D-manno-octulosonate from D-ribulose 5-phosphate: step 2/3. It functions in the pathway bacterial outer membrane biogenesis; lipopolysaccharide biosynthesis. This Bordetella avium (strain 197N) protein is 2-dehydro-3-deoxyphosphooctonate aldolase.